Reading from the N-terminus, the 407-residue chain is MIGASKLIRIWINARVYPAIAGAEIINDAVIVAKEGRLTFVGPASALSIDDRDAETIDCGGRLITPGLVDCHTHIVFGGDRAMEFEMRLEGSTYEEVARAGGGIVSSVKATNALTVDQLVQASLPRVDTLLSEGVSTLEIKSGYGLTIEGELNILRAARALEKVRPVRVVTSYLAAHATPPEYKGRHADYIADVVLPGMDRGHAEKLIDAVDGFCEGIAFTVDEMRRVFNHAKVLGIPVKLHAEQLSNLGGAKMAASYGALSADHLEYLDKEGAEAMAKAGTVAVILPGAFYAINETRKPPIQTLRDAGVRMAIATDCNPGTSPLTSLLLTMNMSATLFRLTVEECICGATREAARALGILDTTGTLEVGKSADLAIWNIERPAELVYRIGFNPLHSRVFKGKQVST.

Fe(3+) contacts are provided by His72 and His74. Residues His72 and His74 each coordinate Zn(2+). 4-imidazolone-5-propanoate-binding residues include Arg81, Tyr144, and His177. Tyr144 provides a ligand contact to N-formimidoyl-L-glutamate. His242 contributes to the Fe(3+) binding site. Residue His242 coordinates Zn(2+). Gln245 contributes to the 4-imidazolone-5-propanoate binding site. Asp317 provides a ligand contact to Fe(3+). Asp317 is a Zn(2+) binding site. Asn319 and Gly321 together coordinate N-formimidoyl-L-glutamate. Thr322 contacts 4-imidazolone-5-propanoate.

This sequence belongs to the metallo-dependent hydrolases superfamily. HutI family. Zn(2+) is required as a cofactor. Fe(3+) serves as cofactor.

The protein resides in the cytoplasm. It catalyses the reaction 4-imidazolone-5-propanoate + H2O = N-formimidoyl-L-glutamate. The protein operates within amino-acid degradation; L-histidine degradation into L-glutamate; N-formimidoyl-L-glutamate from L-histidine: step 3/3. Its function is as follows. Catalyzes the hydrolytic cleavage of the carbon-nitrogen bond in imidazolone-5-propanoate to yield N-formimidoyl-L-glutamate. It is the third step in the universal histidine degradation pathway. The sequence is that of Imidazolonepropionase from Rhizobium rhizogenes (Agrobacterium rhizogenes).